The primary structure comprises 535 residues: uncharacterized protein (535 aa).

Helical transmembrane passes span 7–27 (DFDV…AYLA) and 509–529 (GGAV…ACLA).

Its subcellular location is the cell membrane. This is an uncharacterized protein from Mycobacterium bovis (strain ATCC BAA-935 / AF2122/97).